Consider the following 152-residue polypeptide: Putative polyketide cyclase (152 aa).

To polyketide cyclases.

Its pathway is antibiotic biosynthesis; curamycin biosynthesis. This Streptomyces cyaneus (Streptomyces curacoi) protein is Putative polyketide cyclase (curF).